A 679-amino-acid polypeptide reads, in one-letter code: MAQHLAAVYSQIYGLTLDVSILTFVDPAHINWKTVTKNTEKINKIYLQIMPLLHNQNNIESTSLSVELQHLLHNLKIVLETFSAHLSDYNMYFENIHSLSAPCSRHKSIVFQFYNNCCVSVKMCIINDIEIFSKRLSSVFYCIRSCDALRGINHVIDFLGHLRGVSPIPLPDTYLSNIPCIYCLNEHMMLPNQGESLPSLMMCVNCKHVCKQLNPEPIQGMFENELLQRHIIVESNKQKEQNQTCSIDNQIRDASLSKLNQHTIFENISAPVLELSNLIYWSSGAHKKCANVENTSEMAKLLSYEAKMQNYRKYICKNSTHFFDKYKPYPIESIFCGGIFSSVDDTVKSLKSDCSLAFMKRANYQQLIKKQNELFVRLNKILQGEDTVSHAASAVPLSDKATIVNPDQVLHDAHARKDAYLQKVTKDGLKSLYTCLETQGAVLSNTLSMRVWGGAVYDEIVKLKNHFLFRDQFISLDWIHCETDSVTGFENSKYIKNLIYSQKLSSEHISSLTLQFYKLITGPLSQNVSFFPLPSNIALAHCLDAAGALPHHKLLLTEMIWPSIEPKDWVSQTYNKFYTITSTDLNSIQKEAWFFIRELVLSVSLYNEVLEKNLLVFSALNFEKNCVNLSPNQFCSGIYLTYEDSSPLIFVYENQGWVFKDLYALLYHHLQLSGKNHGT.

A C3H1-type zinc finger spans residues 180 to 208 (CIYCLNEHMMLPNQGESLPSLMMCVNCKH).

Belongs to the herpesviridae TRM1 protein family. Associates with TRM2 and TRM3 to form the tripartite terminase complex. Interacts with portal protein.

It localises to the host nucleus. Component of the molecular motor that translocates viral genomic DNA in empty capsid during DNA packaging. Forms a tripartite terminase complex together with TRM2 and TRM3 in the host cytoplasm. Once the complex reaches the host nucleus, it interacts with the capsid portal vertex. This portal forms a ring in which genomic DNA is translocated into the capsid. TRM1 carries an endonuclease activity that plays an important role for the cleavage of concatemeric viral DNA into unit length genomes. The polypeptide is Tripartite terminase subunit 1 (Saimiriine herpesvirus 2 (strain 11) (SaHV-2)).